Reading from the N-terminus, the 402-residue chain is MSKLVRPHGGGELKPLLLTGDALSAEKARAASLPQLKMSSRETGDLIMMGIGGFTPLDGFMTKSDWQGVCDGYKMTNGLFWPIPITLSTDDESIKDGDELALVDAETGEIMGTMKVTDKYTIDKAHECMQVYKTTDMEHPGVKMVMAQGKYNLAGPVKVLSTGNFKEEYGEQFMTPAETRAKFEQMGWSRVAAFQTRNPMHRSHEYLAKIAIETMDGVLVHSLLGALKPGDIPAEVRSEAIATLIDNYFAPNTVIQAGYPLDMRYAGPREALLHALFRQNYGCSHLIVGRDHAGVGDYYGPFDAQKIFDEIPKGSLETVNMNIDWTFWCKKCGGMASQRTCPHTKDDRILLSGTKVRAMLSEGQDLPVEFSRPEVAKVLQKYYAGLSAEQNVKVELKGHSAA.

This sequence belongs to the sulfate adenylyltransferase family.

It carries out the reaction sulfate + ATP + H(+) = adenosine 5'-phosphosulfate + diphosphate. It participates in sulfur metabolism; hydrogen sulfide biosynthesis; sulfite from sulfate: step 1/3. In Thiobacillus denitrificans (strain ATCC 25259 / T1), this protein is Sulfate adenylyltransferase.